The sequence spans 196 residues: Holliday junction branch migration complex subunit RuvA (196 aa).

Positions 1-63 (MINKIYGKII…EDEIKLFGFL (63 aa)) are domain I. The segment at 64 to 138 (NVSEREVFEE…GKLVKADELT (75 aa)) is domain II. Thr138 is a region of interest (flexible linker). Residues 139–196 (SSVFKFKDLEQSIVNMGFDRKLVVAAIKEIMLIDEFLMLREVEQEQFLFRETLKRLSG) are domain III.

This sequence belongs to the RuvA family. Homotetramer. Forms an RuvA(8)-RuvB(12)-Holliday junction (HJ) complex. HJ DNA is sandwiched between 2 RuvA tetramers; dsDNA enters through RuvA and exits via RuvB. An RuvB hexamer assembles on each DNA strand where it exits the tetramer. Each RuvB hexamer is contacted by two RuvA subunits (via domain III) on 2 adjacent RuvB subunits; this complex drives branch migration. In the full resolvosome a probable DNA-RuvA(4)-RuvB(12)-RuvC(2) complex forms which resolves the HJ.

The protein resides in the cytoplasm. In terms of biological role, the RuvA-RuvB-RuvC complex processes Holliday junction (HJ) DNA during genetic recombination and DNA repair, while the RuvA-RuvB complex plays an important role in the rescue of blocked DNA replication forks via replication fork reversal (RFR). RuvA specifically binds to HJ cruciform DNA, conferring on it an open structure. The RuvB hexamer acts as an ATP-dependent pump, pulling dsDNA into and through the RuvAB complex. HJ branch migration allows RuvC to scan DNA until it finds its consensus sequence, where it cleaves and resolves the cruciform DNA. The protein is Holliday junction branch migration complex subunit RuvA of Borrelia hermsii (strain HS1 / DAH).